A 409-amino-acid polypeptide reads, in one-letter code: Tryptophan synthase beta chain (409 aa).

Lysine 95 carries the N6-(pyridoxal phosphate)lysine modification.

Belongs to the TrpB family. As to quaternary structure, tetramer of two alpha and two beta chains. Pyridoxal 5'-phosphate is required as a cofactor.

The enzyme catalyses (1S,2R)-1-C-(indol-3-yl)glycerol 3-phosphate + L-serine = D-glyceraldehyde 3-phosphate + L-tryptophan + H2O. Its pathway is amino-acid biosynthesis; L-tryptophan biosynthesis; L-tryptophan from chorismate: step 5/5. In terms of biological role, the beta subunit is responsible for the synthesis of L-tryptophan from indole and L-serine. The chain is Tryptophan synthase beta chain from Pseudomonas savastanoi pv. phaseolicola (Pseudomonas syringae pv. phaseolicola).